The sequence spans 453 residues: Glutamyl-tRNA reductase (453 aa).

Substrate is bound by residues 50–53 (TCNR), S110, 115–117 (EPQ), and Q121. The active-site Nucleophile is C51. 190-195 (GAGEMA) provides a ligand contact to NADP(+). Residues 423–436 (REKVPTDAHADRKP) are compositionally biased toward basic and acidic residues. The interval 423–453 (REKVPTDAHADRKPPNFAETSDDFDVTDASE) is disordered. Positions 442–453 (TSDDFDVTDASE) are enriched in acidic residues.

It belongs to the glutamyl-tRNA reductase family. As to quaternary structure, homodimer.

It carries out the reaction (S)-4-amino-5-oxopentanoate + tRNA(Glu) + NADP(+) = L-glutamyl-tRNA(Glu) + NADPH + H(+). It participates in porphyrin-containing compound metabolism; protoporphyrin-IX biosynthesis; 5-aminolevulinate from L-glutamyl-tRNA(Glu): step 1/2. Catalyzes the NADPH-dependent reduction of glutamyl-tRNA(Glu) to glutamate 1-semialdehyde (GSA). The protein is Glutamyl-tRNA reductase of Solidesulfovibrio magneticus (strain ATCC 700980 / DSM 13731 / RS-1) (Desulfovibrio magneticus).